A 445-amino-acid polypeptide reads, in one-letter code: UNC93-like protein MFSD11 (445 aa).

A helical membrane pass occupies residues 8 to 28; that stretch reads LLNIVILGVGFMFMFTAFQTS. The N-linked (GlcNAc...) asparagine glycan is linked to Asn40. The next 4 membrane-spanning stretches (helical) occupy residues 52-72, 74-94, 98-118, and 138-158; these read LAII…VIAV, GCQM…AMFI, TWSF…LWTA, and IFWA…YLAW. The N-linked (GlcNAc...) asparagine glycan is linked to Asn163. 7 helical membrane passes run 170–190, 239–259, 277–297, 309–329, 343–363, 385–405, and 415–435; these read RTVF…FFLI, MLLL…YSGV, LIGL…GLFG, PVVI…YLYM, LSAF…LLGL, APAF…AFFY, and LLIL…VEWG.

It belongs to the unc-93 family.

It is found in the membrane. The polypeptide is UNC93-like protein MFSD11 (mfsd11) (Xenopus laevis (African clawed frog)).